We begin with the raw amino-acid sequence, 469 residues long: Ubiquitin carboxyl-terminal hydrolase MINDY-1 (469 aa).

Residues 1–105 (MEHHQPEHPA…RLQELPQSPR (105 aa)) form a disordered region. Residues 23 to 44 (ENHKVLSEPKEHPQDKDAKEAD) are compositionally biased toward basic and acidic residues. Ser-103 bears the Phosphoserine mark. Cys-137 functions as the Nucleophile in the catalytic mechanism. Residue His-319 is the Proton acceptor of the active site. Residues 388-428 (QVDQDYLIALSLQQQQPPPQGTSGLSDLELAQQLQQEEYQQ) form a ubiquitin-binding domain (UBD) region. Residues 401–469 (QQQPPPQGTS…PKQESDCVLL (69 aa)) form a disordered region. Over residues 415–448 (LELAQQLQQEEYQQHQAAQAAPARAPSPQGRGAA) the composition is skewed to low complexity. Ser-441 is modified (phosphoserine). Residues 453–469 (AAERRQRPKQESDCVLL) show a composition bias toward basic and acidic residues.

This sequence belongs to the MINDY deubiquitinase family. FAM63 subfamily.

The catalysed reaction is Thiol-dependent hydrolysis of ester, thioester, amide, peptide and isopeptide bonds formed by the C-terminal Gly of ubiquitin (a 76-residue protein attached to proteins as an intracellular targeting signal).. Its function is as follows. Hydrolase that can specifically remove 'Lys-48'-linked conjugated ubiquitin from proteins. Has exodeubiquitinase activity and has a preference for long polyubiquitin chains. May play a regulatory role at the level of protein turnover. The protein is Ubiquitin carboxyl-terminal hydrolase MINDY-1 (MINDY1) of Bos taurus (Bovine).